A 148-amino-acid chain; its full sequence is Large ribosomal subunit protein bL9 (148 aa).

This sequence belongs to the bacterial ribosomal protein bL9 family.

Functionally, binds to the 23S rRNA. This Salinispora arenicola (strain CNS-205) protein is Large ribosomal subunit protein bL9.